The sequence spans 469 residues: Glutamine synthetase (469 aa).

The 85-residue stretch at 13–97 folds into the GS beta-grasp domain; sequence NEVKFVDLRF…IRCDILEPAT (85 aa). The region spanning 105 to 469 is the GS catalytic domain; sequence PRSIAKRAEE…PLEFELYYSV (365 aa). Residues Glu-130 and Glu-132 each coordinate Mg(2+). Residue Glu-208 participates in ATP binding. Mg(2+)-binding residues include Glu-213 and Glu-221. L-glutamate is bound by residues 265 to 266 and Gly-266; that span reads NG. A Mg(2+)-binding site is contributed by His-270. ATP is bound by residues 272–274 and Ser-274; that span reads HQS. L-glutamate is bound by residues Arg-322, Glu-328, and Arg-340. Residues Arg-340, Arg-345, and Lys-353 each contribute to the ATP site. Glu-358 serves as a coordination point for Mg(2+). Arg-360 lines the L-glutamate pocket. O-AMP-tyrosine is present on Tyr-398.

It belongs to the glutamine synthetase family. As to quaternary structure, oligomer of 12 subunits arranged in the form of two hexameric ring. Mg(2+) serves as cofactor.

It localises to the cytoplasm. The enzyme catalyses L-glutamate + NH4(+) + ATP = L-glutamine + ADP + phosphate + H(+). The activity of this enzyme could be controlled by adenylation under conditions of abundant glutamine. Catalyzes the ATP-dependent biosynthesis of glutamine from glutamate and ammonia. In Vibrio cholerae serotype O1 (strain ATCC 39315 / El Tor Inaba N16961), this protein is Glutamine synthetase (glnAv).